The primary structure comprises 2376 residues: Serine/threonine-protein kinase WNK1 (2376 aa).

Disordered stretches follow at residues 1–78 (MSGG…EHRF) and 93–201 (ELPG…QQDD). 2 stretches are compositionally biased toward low complexity: residues 10–19 (SSPPGSLFLS) and 40–49 (GAAAADAGAG). Phosphoserine occurs at positions 15 and 19. The segment covering 50–66 (RTEEYRRRRHTMDKDSR) has biased composition (basic and acidic residues). Phosphothreonine is present on Thr-60. Over residues 125–158 (TPAVAHVAQQPPAAATPGEPAAAVPAAASAPGSA) the composition is skewed to low complexity. Residue Ser-172 is modified to Phosphoserine. Positions 219-477 (LKFDIEIGRG…IKDLLNHAFF (259 aa)) constitute a Protein kinase domain. Residue Ser-229 coordinates ATP. Phe-281 and Leu-297 together coordinate chloride. ATP is bound by residues 299–302 (TELM) and Lys-349. Asp-366 functions as the Proton acceptor in the catalytic mechanism. Positions 367 and 369 each coordinate chloride. Phosphoserine; by autocatalysis is present on residues Ser-376 and Ser-380. The tract at residues 486–553 (ELAEEDDGEK…VCEGDHKTMA (68 aa)) is autoinhibitory domain. Over residues 571–586 (QLVREEQEKRKQEESS) the composition is skewed to basic and acidic residues. 3 disordered regions span residues 571–641 (QLVR…QLQY), 701–799 (AQPH…PVPT), and 1026–1118 (TTSS…SRPK). 2 stretches are compositionally biased toward low complexity: residues 587–601 (LKQQ…SQAG) and 614–624 (AAATTSASVST). Residues 627-637 (EPEEPEADQHQ) are interaction with KLHL3. A compositionally biased stretch (low complexity) spans 708 to 752 (PPSSMAQGQSQGQPSSSSLTGIPSSQPVQHSQQQQGVQQTAPSQQ). A compositionally biased stretch (polar residues) spans 753-766 (TVQYSLPQTSAPSE). Over residues 1045 to 1057 (PPEPVPAAPPQPT) the composition is skewed to pro residues. Polar residues predominate over residues 1079-1089 (SDGNENVPSSS). Basic residues predominate over residues 1097–1118 (IKRHYRKSVRSRSRHEKTSRPK). The short motif at 1257-1260 (RFIV) is the RFXV motif 1 element. At Ser-1261 the chain carries Phosphoserine. Disordered stretches follow at residues 1459–1478 (STAA…VSGS) and 1734–1770 (STIP…PPSE). Positions 1746–1756 (SKPPSTKPPVL) are enriched in pro residues. Positions 1853–1856 (RFQV) match the RFXV motif 2 motif. Residues 1862 to 1878 (DTQKEGKNKSEDVKSVH) are compositionally biased toward basic and acidic residues. Residues 1862-1942 (DTQKEGKNKS…QPTKVGRFQV (81 aa)) form a disordered region. Residues 1881–1899 (SSTSESSVLSSSSPESTLV) are compositionally biased toward low complexity. 2 consecutive short sequence motifs (RFXV motif) follow at residues 1939–1942 (RFQV) and 1951–1954 (RFSV). 7 positions are modified to phosphoserine: Ser-1972, Ser-1996, Ser-2005, Ser-2006, Ser-2021, Ser-2023, and Ser-2026. Disordered regions lie at residues 1991 to 2033 (EKPE…LCSK) and 2110 to 2239 (AAAP…RKGT). Residues 2116–2128 (GRRRRPTKSKGSK) show a composition bias toward basic residues. A compositionally biased stretch (low complexity) spans 2129–2141 (SSRSSSLGNKSPG). Polar residues-rich tracts occupy residues 2146–2161 (LSGQ…QQTL) and 2169–2193 (ETGQ…SAFT). Low complexity predominate over residues 2207 to 2223 (GQGTSSTNTVGGTVSSQ). The span at 2224 to 2238 (AAQAQPPTMTSSRKG) shows a compositional bias: polar residues. Residues 2235–2255 (SRKGTFTDDLHKLVDNWARDA) are amphipathic alpha-helix. Residues Ser-2264, Ser-2280, Ser-2364, and Ser-2366 each carry the phosphoserine modification.

It belongs to the protein kinase superfamily. Ser/Thr protein kinase family. WNK subfamily. As to quaternary structure, interacts with WNK3. Interacts with WNK4; inhibiting the activity of WNK4. Interacts with SGK1; promoting its activation. Associates with the mTORC2 complex. Interacts with UVRAG. Interacts (via amphipathic alpha-helix region) with EMC2; promoting the ER membrane protein complex assembly. Requires Mg(2+) as cofactor. Post-translationally, autophosphorylated at Ser-376 and Ser-380, promoting its activity. Autophosphorylation at Ser-380 is inhibited by intracellular calcium. Phosphorylation at Thr-60 increases ability to activate SGK1. In terms of processing, ubiquitinated by the BCR(KLHL3) complex, leading to its degradation. Also ubiquitinated by the BCR(KLHL2) complex.

The protein resides in the cytoplasm. The protein localises to the nucleus. It localises to the cytoskeleton. It is found in the spindle. The enzyme catalyses L-seryl-[protein] + ATP = O-phospho-L-seryl-[protein] + ADP + H(+). It catalyses the reaction L-threonyl-[protein] + ATP = O-phospho-L-threonyl-[protein] + ADP + H(+). Its activity is regulated as follows. Activated in response to hyperosmotic stress: cell shrinkage promotes formation of a membraneless compartment that concentrates WNK1 with its substrates, OXSR1/OSR1 and STK39/SPAK. Activation requires autophosphorylation of Ser-380 and, to a lower extent, Ser-376. Autophosphorylation and subsequent activation is inhibited by increases in intracellular ionic strength: Cl(-) potently inhibits WNK1 kinase activity via direct binding. Also inhibited by K(+) ions. Functionally, serine/threonine-protein kinase component of the WNK1-SPAK/OSR1 kinase cascade, which acts as a key regulator of blood pressure and regulatory volume increase by promoting ion influx. WNK1 mediates regulatory volume increase in response to hyperosmotic stress by acting as a molecular crowding sensor, which senses cell shrinkage and mediates formation of a membraneless compartment by undergoing liquid-liquid phase separation. The membraneless compartment concentrates WNK1 with its substrates, OXSR1/OSR1 and STK39/SPAK, promoting WNK1-dependent phosphorylation and activation of downstream kinases OXSR1/OSR1 and STK39/SPAK. Following activation, OXSR1/OSR1 and STK39/SPAK catalyze phosphorylation of ion cotransporters SLC12A1/NKCC2, SLC12A2/NKCC1, SLC12A5/KCC2 and SLC12A6/KCC3, regulating their activity. Phosphorylation of Na-K-Cl cotransporters SLC12A2/NKCC1 and SLC12A2/NKCC1 promote their activation and ion influx; simultaneously, phosphorylation of K-Cl cotransporters SLC12A5/KCC2 and SLC12A6/KCC3 inhibit their activity, blocking ion efflux. Also acts as a regulator of angiogenesis in endothelial cells via activation of OXSR1/OSR1 and STK39/SPAK: activation of OXSR1/OSR1 regulates chemotaxis and invasion, while STK39/SPAK regulates endothelial cell proliferation. Also acts independently of the WNK1-SPAK/OSR1 kinase cascade by catalyzing phosphorylation of other substrates, such as SYT2, PCF11 and NEDD4L. Mediates phosphorylation of SYT2, regulating SYT2 association with phospholipids and membrane-binding. Regulates mRNA export in the nucleus by mediating phosphorylation of PCF11, thereby decreasing the association between PCF11 and POLR2A/RNA polymerase II and promoting mRNA export to the cytoplasm. Acts as a negative regulator of autophagy. Required for the abscission step during mitosis, independently of the WNK1-SPAK/OSR1 kinase cascade. May also play a role in actin cytoskeletal reorganization. Also acts as a scaffold protein independently of its protein kinase activity: negatively regulates cell membrane localization of various transporters and channels, such as SLC4A4, SLC26A6, SLC26A9, TRPV4 and CFTR. Involved in the regulation of epithelial Na(+) channel (ENaC) by promoting activation of SGK1 in a kinase-independent manner: probably acts as a scaffold protein that promotes the recruitment of SGK1 to the mTORC2 complex in response to chloride, leading to mTORC2-dependent phosphorylation and activation of SGK1. Acts as an assembly factor for the ER membrane protein complex independently of its protein kinase activity: associates with EMC2 in the cytoplasm via its amphipathic alpha-helix, and prevents EMC2 ubiquitination and subsequent degradation, thereby promoting EMC2 stabilization. The sequence is that of Serine/threonine-protein kinase WNK1 from Sus scrofa (Pig).